Reading from the N-terminus, the 104-residue chain is Complex III assembly factor LYRM7 (104 aa).

This sequence belongs to the complex I LYR family. As to quaternary structure, interacts with UQCRFS1.

Its subcellular location is the mitochondrion matrix. In terms of biological role, assembly factor required for Rieske Fe-S protein UQCRFS1 incorporation into the cytochrome b-c1 (CIII) complex. Functions as a chaperone, binding to this subunit within the mitochondrial matrix and stabilizing it prior to its translocation and insertion into the late CIII dimeric intermediate within the mitochondrial inner membrane. The sequence is that of Complex III assembly factor LYRM7 (lyrm7) from Tetraodon nigroviridis (Spotted green pufferfish).